The following is a 247-amino-acid chain: MTTNPKPAYRRILLKLSGEALMGDEGFGIDPKVLDRMAQEIKELVEMGIQVGLVIGGGNLFRGAGLAEAGMNRVVGDQMGMLATVMNGLAMRDALHRAFVNTRLMSAIDLAGVCERYNWANAISLLKSGRVVIFSAGTGNPFFTTDSAACLRGIEIEADAVLKATKVDGVYSEDPAKNPEAELYSELSYDEVLDKELKVMDLAAFTLARDHNIPIRVFNMNKPGALKSVIMGNTEGTVISHKKRTET.

An ATP-binding site is contributed by 15-18 (KLSG). The segment at 23–28 (GDEGFG) is involved in allosteric activation by GTP. Gly-57 is a UMP binding site. ATP is bound by residues Gly-58 and Arg-62. Residues Asp-77 and 138–145 (TGNPFFTT) each bind UMP. ATP contacts are provided by Thr-165, Tyr-171, and Asp-174.

This sequence belongs to the UMP kinase family. In terms of assembly, homohexamer.

Its subcellular location is the cytoplasm. It catalyses the reaction UMP + ATP = UDP + ADP. It functions in the pathway pyrimidine metabolism; CTP biosynthesis via de novo pathway; UDP from UMP (UMPK route): step 1/1. Its activity is regulated as follows. Allosterically activated by GTP. Inhibited by UTP. Functionally, catalyzes the reversible phosphorylation of UMP to UDP. In Colwellia psychrerythraea (strain 34H / ATCC BAA-681) (Vibrio psychroerythus), this protein is Uridylate kinase.